A 345-amino-acid polypeptide reads, in one-letter code: Glycerol-3-phosphate dehydrogenase [NAD(P)+] (345 aa).

The NADPH site is built by Ser11, Trp12, Arg32, Arg33, and Lys105. Lys105, Gly136, and Ser138 together coordinate sn-glycerol 3-phosphate. Residue Ala140 participates in NADPH binding. 5 residues coordinate sn-glycerol 3-phosphate: Lys191, Asp244, Ser254, Arg255, and Asn256. Lys191 serves as the catalytic Proton acceptor. Residue Arg255 coordinates NADPH. Residues Val279 and Glu281 each coordinate NADPH.

This sequence belongs to the NAD-dependent glycerol-3-phosphate dehydrogenase family.

It localises to the cytoplasm. It carries out the reaction sn-glycerol 3-phosphate + NAD(+) = dihydroxyacetone phosphate + NADH + H(+). The catalysed reaction is sn-glycerol 3-phosphate + NADP(+) = dihydroxyacetone phosphate + NADPH + H(+). It participates in membrane lipid metabolism; glycerophospholipid metabolism. In terms of biological role, catalyzes the reduction of the glycolytic intermediate dihydroxyacetone phosphate (DHAP) to sn-glycerol 3-phosphate (G3P), the key precursor for phospholipid synthesis. The sequence is that of Glycerol-3-phosphate dehydrogenase [NAD(P)+] from Halalkalibacterium halodurans (strain ATCC BAA-125 / DSM 18197 / FERM 7344 / JCM 9153 / C-125) (Bacillus halodurans).